Here is a 143-residue protein sequence, read N- to C-terminus: Ribosome-binding factor A (143 aa).

The segment at 123 to 143 (VRAQAAQAKPAGEANPYKERN) is disordered. The segment covering 124 to 136 (RAQAAQAKPAGEA) has biased composition (low complexity).

Belongs to the RbfA family. As to quaternary structure, monomer. Binds 30S ribosomal subunits, but not 50S ribosomal subunits or 70S ribosomes.

The protein localises to the cytoplasm. In terms of biological role, one of several proteins that assist in the late maturation steps of the functional core of the 30S ribosomal subunit. Associates with free 30S ribosomal subunits (but not with 30S subunits that are part of 70S ribosomes or polysomes). Required for efficient processing of 16S rRNA. May interact with the 5'-terminal helix region of 16S rRNA. The polypeptide is Ribosome-binding factor A (Corynebacterium urealyticum (strain ATCC 43042 / DSM 7109)).